The following is a 350-amino-acid chain: UDP-glucose 4-epimerase 2 (350 aa).

Residues 12 to 14 (GYI), 33 to 37 (DNYDN), 63 to 64 (DL), Phe85, and Lys89 each bind NAD(+). 129–131 (SAT) contacts substrate. Catalysis depends on Tyr153, which acts as the Proton acceptor. Residues Lys157 and Tyr181 each contribute to the NAD(+) site. Residues 181-183 (YFN), 202-204 (NNL), 220-222 (TVF), Arg235, and 297-300 (RPGD) each bind substrate.

The protein belongs to the NAD(P)-dependent epimerase/dehydratase family. In terms of assembly, forms homodimers and heterodimers. Requires NAD(+) as cofactor. As to expression, widely expressed. Most highly expressed in stems and flowers.

It is found in the cytoplasm. The enzyme catalyses UDP-alpha-D-glucose = UDP-alpha-D-galactose. The protein operates within carbohydrate metabolism; galactose metabolism. Its activity is regulated as follows. Enhanced activity by NaCl. Enhanced activity by NAD(+). Strongly inhibited by UDP. Its function is as follows. Catalyzes the interconversion between UDP-glucose and UDP-galactose. Cooperates with UGE3 in pollen development and with UGE4 in cell wall carbohydrate biosynthesis and growth. The polypeptide is UDP-glucose 4-epimerase 2 (Arabidopsis thaliana (Mouse-ear cress)).